A 504-amino-acid polypeptide reads, in one-letter code: Aspartyl/glutamyl-tRNA(Asn/Gln) amidotransferase subunit B (504 aa).

It belongs to the GatB/GatE family. GatB subfamily. As to quaternary structure, heterotrimer of A, B and C subunits.

The enzyme catalyses L-glutamyl-tRNA(Gln) + L-glutamine + ATP + H2O = L-glutaminyl-tRNA(Gln) + L-glutamate + ADP + phosphate + H(+). The catalysed reaction is L-aspartyl-tRNA(Asn) + L-glutamine + ATP + H2O = L-asparaginyl-tRNA(Asn) + L-glutamate + ADP + phosphate + 2 H(+). Allows the formation of correctly charged Asn-tRNA(Asn) or Gln-tRNA(Gln) through the transamidation of misacylated Asp-tRNA(Asn) or Glu-tRNA(Gln) in organisms which lack either or both of asparaginyl-tRNA or glutaminyl-tRNA synthetases. The reaction takes place in the presence of glutamine and ATP through an activated phospho-Asp-tRNA(Asn) or phospho-Glu-tRNA(Gln). This Tropheryma whipplei (strain TW08/27) (Whipple's bacillus) protein is Aspartyl/glutamyl-tRNA(Asn/Gln) amidotransferase subunit B.